We begin with the raw amino-acid sequence, 481 residues long: MSKPIRVRYAPSPTGLLHIGNARTALFNYLYARRHGGTFIIRIEDTDRKRHVEDGERSQLENLKWLGMDWDESPETHENYRQSERLALYQQYIDQLLAEGKAYKSYVTEEELAAERERQEAAGETPRYINEFIGMSADEKAKYISEREAAGVVPTVRLAVNESGIYKWTDMVKGDIEFEGGNIGGDWVIQKKDGYPTYNFAVVVDDHDMQISHVIRGDDHIANTPKQLMVYEALGWEAPEFGHMTLIINSETGKKLSKRDTNTLQFIEDYRKKGYMPEAVFNFIALLGWNPGGEEEIFSREQLIALFDENRLSKSPAAFDQKKMDWMSNEYLKHADFETVYALCKPFLEEAGRLTEKAEKLVELYKPQLKSADEIIPLTDLFFSDFPELTEAEKEVMAGETVSTVLQAFKAKLEAMSDEDFKPENIFPQIKAVQKETGIKGKNLFMPIRIAVSGEMHGPELPNTIYLLGRDKSIEHIKNML.

A 'HIGH' region motif is present at residues 11-21; the sequence is PSPTGLLHIGN. Residues 255–259 carry the 'KMSKS' region motif; sequence KLSKR. K258 is an ATP binding site.

The protein belongs to the class-I aminoacyl-tRNA synthetase family. Glutamate--tRNA ligase type 1 subfamily. In terms of assembly, monomer.

It localises to the cytoplasm. It carries out the reaction tRNA(Glu) + L-glutamate + ATP = L-glutamyl-tRNA(Glu) + AMP + diphosphate. Its function is as follows. Catalyzes the attachment of glutamate to tRNA(Glu) in a two-step reaction: glutamate is first activated by ATP to form Glu-AMP and then transferred to the acceptor end of tRNA(Glu). This Streptococcus pyogenes serotype M4 (strain MGAS10750) protein is Glutamate--tRNA ligase.